The chain runs to 271 residues: Thymidine kinase (271 aa).

ATP-binding positions include G74–T81 and D152–Q155. The active-site Proton acceptor is E153. A substrate-binding site is contributed by Y184. C209 and C212 together coordinate Zn(2+). Substrate is bound at residue Y237. C241 contributes to the Zn(2+) binding site.

Belongs to the thymidine kinase family.

It catalyses the reaction thymidine + ATP = dTMP + ADP + H(+). This is Thymidine kinase (TK) from Oryza sativa subsp. japonica (Rice).